Here is a 182-residue protein sequence, read N- to C-terminus: Heat shock protein beta-2 (182 aa).

One can recognise a sHSP domain in the interval 55–163 (RAGEGGRAGA…DTEVNEVYIS (109 aa)).

This sequence belongs to the small heat shock protein (HSP20) family. As to quaternary structure, interacts with DMPK; may enhance its kinase activity.

The protein resides in the cytoplasm. It is found in the nucleus. In terms of biological role, may regulate the kinase DMPK. The chain is Heat shock protein beta-2 (Hspb2) from Rattus norvegicus (Rat).